We begin with the raw amino-acid sequence, 339 residues long: Anthranilate phosphoribosyltransferase (339 aa).

5-phospho-alpha-D-ribose 1-diphosphate-binding positions include Gly81, 84-85 (GD), Ser89, 91-94 (NVSS), 109-117 (KHGNRALSS), and Ala121. Gly81 is an anthranilate binding site. Residue Ser93 coordinates Mg(2+). Asn112 serves as a coordination point for anthranilate. Arg167 serves as a coordination point for anthranilate. Positions 225 and 226 each coordinate Mg(2+).

This sequence belongs to the anthranilate phosphoribosyltransferase family. Homodimer. It depends on Mg(2+) as a cofactor.

The catalysed reaction is N-(5-phospho-beta-D-ribosyl)anthranilate + diphosphate = 5-phospho-alpha-D-ribose 1-diphosphate + anthranilate. The protein operates within amino-acid biosynthesis; L-tryptophan biosynthesis; L-tryptophan from chorismate: step 2/5. Its function is as follows. Catalyzes the transfer of the phosphoribosyl group of 5-phosphorylribose-1-pyrophosphate (PRPP) to anthranilate to yield N-(5'-phosphoribosyl)-anthranilate (PRA). This is Anthranilate phosphoribosyltransferase from Brucella suis (strain ATCC 23445 / NCTC 10510).